Consider the following 256-residue polypeptide: Homeobox protein TGIF2LX (256 aa).

The disordered stretch occupies residues 1–45 (MEAAADSPAETRSRVEKDSRRVEKDSRRPKKDSPAKTQSPAQDTS). The span at 9–34 (AETRSRVEKDSRRVEKDSRRPKKDSP) shows a compositional bias: basic and acidic residues. Polar residues predominate over residues 35 to 45 (AKTQSPAQDTS). The segment at residues 62–125 (EHKKKRKGYL…INARRRILPD (64 aa)) is a DNA-binding region (homeobox; TALE-type). The tract at residues 136–224 (VGHKTGKDAN…SSSPEPVSTE (89 aa)) is disordered. Polar residues predominate over residues 166–179 (DNVQSLPLRSSPKG). A compositionally biased stretch (low complexity) spans 209–224 (VSNITSSSSPEPVSTE).

This sequence belongs to the TALE/TGIF homeobox family.

Its subcellular location is the nucleus. May have a transcription role in testis. The polypeptide is Homeobox protein TGIF2LX (TGIF2LX) (Papio hamadryas (Hamadryas baboon)).